The following is a 276-amino-acid chain: 4-deoxy-L-threo-5-hexosulose-uronate ketol-isomerase 1 (276 aa).

Positions 194, 196, 201, and 243 each coordinate Zn(2+).

It belongs to the KduI family. The cofactor is Zn(2+).

It catalyses the reaction 5-dehydro-4-deoxy-D-glucuronate = 3-deoxy-D-glycero-2,5-hexodiulosonate. It functions in the pathway glycan metabolism; pectin degradation; 2-dehydro-3-deoxy-D-gluconate from pectin: step 4/5. In terms of biological role, catalyzes the isomerization of 5-dehydro-4-deoxy-D-glucuronate to 3-deoxy-D-glycero-2,5-hexodiulosonate. This is 4-deoxy-L-threo-5-hexosulose-uronate ketol-isomerase 1 (kduI1) from Enterococcus faecalis (strain ATCC 700802 / V583).